Here is a 376-residue protein sequence, read N- to C-terminus: UDP-N-acetylglucosamine 2-epimerase (376 aa).

Substrate is bound by residues arginine 10, lysine 15, aspartate 95, glutamate 117, histidine 213, glutamine 271, phenylalanine 276, 290–292 (SGG), glutamate 296, and arginine 313.

The protein belongs to the UDP-N-acetylglucosamine 2-epimerase family. As to quaternary structure, homodimer.

The protein localises to the cytoplasm. The enzyme catalyses UDP-N-acetyl-alpha-D-glucosamine = UDP-N-acetyl-alpha-D-mannosamine. It functions in the pathway bacterial outer membrane biogenesis; enterobacterial common antigen biosynthesis. Functionally, catalyzes the reversible epimerization at C-2 of UDP-N-acetylglucosamine (UDP-GlcNAc) and thereby provides bacteria with UDP-N-acetylmannosamine (UDP-ManNAc), the activated donor of ManNAc residues. The protein is UDP-N-acetylglucosamine 2-epimerase of Salmonella typhimurium (strain LT2 / SGSC1412 / ATCC 700720).